An 896-amino-acid polypeptide reads, in one-letter code: Androgen receptor (896 aa).

A modulating region spans residues 1–534 (MEVQLGLGRV…PIDYYFPPQK (534 aa)). An interaction with ZNF318 region spans residues 1 to 563 (MEVQLGLGRV…GSCKVFFKRA (563 aa)). 2 disordered regions span residues 35-152 (QNPG…LSLL) and 178-218 (LLQQ…YLGG). The segment covering 54–78 (LQQQQLQQQETSPRRQQQQQQQPSE) has biased composition (low complexity). S65 bears the Phosphoserine; by CDK9 mark. Phosphoserine is present on S81. Positions 178-189 (LLQQQQQQQQQQ) are enriched in low complexity. Polar residues predominate over residues 190-199 (EAVSEGNSSG). Y215 is modified (phosphotyrosine; by CSK). Phosphoserine is present on S248. The residue at position 259 (Y259) is a Phosphotyrosine; by CSK and TNK2. Residues Y299, Y338, Y349, and Y354 each carry the phosphotyrosine; by CSK modification. Residue Y355 is modified to Phosphotyrosine; by CSK and TNK2. K378 participates in a covalent cross-link: Glycyl lysine isopeptide (Lys-Gly) (interchain with G-Cter in SUMO). Y385 bears the Phosphotyrosine; by CSK mark. Residue K497 forms a Glycyl lysine isopeptide (Lys-Gly) (interchain with G-Cter in SUMO) linkage. Residues Y511 and Y528 each carry the phosphotyrosine; by CSK modification. The interaction with LPXN stretch occupies residues 528–895 (YYFPPQKTCL…GKVKPIYFHT (368 aa)). The nuclear receptor DNA-binding region spans 535–608 (TCLICGDEAS…AGMTLGARKL (74 aa)). 2 consecutive NR C4-type zinc fingers follow at residues 536 to 556 (CLIC…CGSC) and 572 to 596 (CASR…LRKC). The segment at 548-638 (YGALTCGSCK…TEEPAQKLTV (91 aa)) is interaction with HIPK3. Positions 568–895 (QKYLCASRND…GKVKPIYFHT (328 aa)) are interaction with CCAR1. The tract at residues 601 to 895 (MTLGARKLKK…GKVKPIYFHT (295 aa)) is interaction with KAT7. Residue S627 is modified to Phosphoserine; by STK4/MST1. One can recognise an NR LBD domain in the interval 645–876 (ECQPIFLNVL…DFPEMMAEII (232 aa)). The 17beta-hydroxy-5alpha-androstan-3-one site is built by N682 and R729. Glycyl lysine isopeptide (Lys-Gly) (interchain with G-Cter in ubiquitin) cross-links involve residues K822 and K824. T854 is a 17beta-hydroxy-5alpha-androstan-3-one binding site. Y892 carries the phosphotyrosine; by CSK modification.

It belongs to the nuclear hormone receptor family. NR3 subfamily. Binds DNA as a homodimer. Part of a ternary complex containing AR, EFCAB6/DJBP and PARK7. Interacts with HIPK3 and NR0B2 in the presence of androgen. The ligand binding domain interacts with KAT7/HBO1 in the presence of dihydrotestosterone. Interacts with EFCAB6/DJBP, PQBP1, RANBP9, RBAK, SPDEF, SRA1, TGFB1I1 and RREB1. Interacts with ZMIZ1/ZIMP10 and ZMIZ2/ZMIP7 which both enhance its transactivation activity. Interacts with SLC30A9 and RAD54L2/ARIP4. Interacts with MACROD1 (via macro domain). Interacts via the ligand-binding domain with LXXLL and FXXLF motifs from NCOA1, NCOA2, NCOA3 and MAGEA11. Interacts (via nuclear receptor DNA binding domain and nuclear receptor ligand binding domain) with NCOA4. The AR N-terminal poly-Gln region binds Ran resulting in enhancement of AR-mediated transactivation. Ran-binding decreases as the poly-Gln length increases. Interacts with HIP1 (via coiled coil domain). Interacts (via ligand-binding domain) with TRIM68. Interacts with TNK2. Interacts with USP26. Interacts with RNF6. Interacts (regulated by RNF6 probably through polyubiquitination) with RNF14; regulates AR transcriptional activity. Interacts with PRMT2 and TRIM24. Interacts with RACK1. Interacts with RANBP10; this interaction enhances dihydrotestosterone-induced AR transcriptional activity. Interacts with PRPF6 in a hormone-independent way; this interaction enhances dihydrotestosterone-induced AR transcriptional activity. Interacts with STK4/MST1. Interacts with ZIPK/DAPK3. Interacts with LPXN. Interacts with MAK. Part of a complex containing AR, MAK and NCOA3. Interacts with CRY1. Interacts with CCAR1 and GATA2. Interacts with ZNF318. Interacts with BUD31. Interacts with ARID4A. Interacts with ARID4B. Interacts (via NR LBD domain) with ZBTB7A; the interaction is direct and androgen-dependent. Interacts with NCOR1. Interacts with NCOR2. Interacts with CRY2 in a ligand-dependent manner. Post-translationally, phosphorylated in prostate cancer cells in response to several growth factors including EGF. Phosphorylation is induced by c-Src kinase (CSK). Tyr-511 is one of the major phosphorylation sites and an increase in phosphorylation and Src kinase activity is associated with prostate cancer progression. Phosphorylation by TNK2 enhances the DNA-binding and transcriptional activity. Phosphorylation at Ser-65 by CDK9 regulates AR promoter selectivity and cell growth. Sumoylated on Lys-378 (major) and Lys-497. Ubiquitinated. Deubiquitinated by USP26. 'Lys-6' and 'Lys-27'-linked polyubiquitination by RNF6 modulates AR transcriptional activity and specificity. In terms of processing, palmitoylated by ZDHHC7 and ZDHHC21. Palmitoylation is required for plasma membrane targeting and for rapid intracellular signaling via ERK and AKT kinases and cAMP generation.

The protein localises to the nucleus. Its subcellular location is the cytoplasm. Steroid hormone receptors are ligand-activated transcription factors that regulate eukaryotic gene expression and affect cellular proliferation and differentiation in target tissues. Transcription factor activity is modulated by bound coactivator and corepressor proteins like ZBTB7A that recruits NCOR1 and NCOR2 to the androgen response elements/ARE on target genes, negatively regulating androgen receptor signaling and androgen-induced cell proliferation. Transcription activation is also down-regulated by NR0B2. Activated, but not phosphorylated, by HIPK3 and ZIPK/DAPK3. This is Androgen receptor (AR) from Sus scrofa (Pig).